A 505-amino-acid chain; its full sequence is Glutamate--tRNA ligase (505 aa).

The 'HIGH' region motif lies at 12-22 (PSPTGPLHIGG). A 'KMSKS' region motif is present at residues 260 to 264 (KLSKR). Residue Lys263 participates in ATP binding.

It belongs to the class-I aminoacyl-tRNA synthetase family. Glutamate--tRNA ligase type 1 subfamily. As to quaternary structure, monomer.

The protein resides in the cytoplasm. It catalyses the reaction tRNA(Glu) + L-glutamate + ATP = L-glutamyl-tRNA(Glu) + AMP + diphosphate. Functionally, catalyzes the attachment of glutamate to tRNA(Glu) in a two-step reaction: glutamate is first activated by ATP to form Glu-AMP and then transferred to the acceptor end of tRNA(Glu). The chain is Glutamate--tRNA ligase from Porphyromonas gingivalis (strain ATCC BAA-308 / W83).